The primary structure comprises 210 residues: Outer-membrane lipoprotein LolB (210 aa).

A signal peptide spans 1-29 (MSLISNNEERSLRVRYCIAIALSALLISG). Cysteine 30 carries N-palmitoyl cysteine lipidation. Cysteine 30 is lipidated: S-diacylglycerol cysteine.

The protein belongs to the LolB family. Monomer.

It localises to the cell outer membrane. Its function is as follows. Plays a critical role in the incorporation of lipoproteins in the outer membrane after they are released by the LolA protein. This is Outer-membrane lipoprotein LolB from Coxiella burnetii (strain RSA 493 / Nine Mile phase I).